A 43-amino-acid polypeptide reads, in one-letter code: Protein PsbN (43 aa).

Residues 5–27 (TLVAISISGLLVSFTGYALYTAF) traverse the membrane as a helical segment.

It belongs to the PsbN family.

The protein localises to the plastid. It is found in the chloroplast thylakoid membrane. In terms of biological role, may play a role in photosystem I and II biogenesis. This Eucalyptus globulus subsp. globulus (Tasmanian blue gum) protein is Protein PsbN.